A 161-amino-acid polypeptide reads, in one-letter code: Cyclic pyranopterin monophosphate synthase (161 aa).

Substrate is bound by residues 75–77 and 113–114; these read LCH and ME. Residue Asp-128 is part of the active site.

This sequence belongs to the MoaC family. As to quaternary structure, homohexamer; trimer of dimers.

It carries out the reaction (8S)-3',8-cyclo-7,8-dihydroguanosine 5'-triphosphate = cyclic pyranopterin phosphate + diphosphate. It functions in the pathway cofactor biosynthesis; molybdopterin biosynthesis. In terms of biological role, catalyzes the conversion of (8S)-3',8-cyclo-7,8-dihydroguanosine 5'-triphosphate to cyclic pyranopterin monophosphate (cPMP). In Salmonella heidelberg (strain SL476), this protein is Cyclic pyranopterin monophosphate synthase.